The primary structure comprises 1208 residues: DNA-directed RNA polymerase subunit beta (1208 aa).

The disordered stretch occupies residues 1182–1208 (EKKAAEQVEDEKDDVIQNFETAEDNLD).

This sequence belongs to the RNA polymerase beta chain family. In terms of assembly, the RNAP catalytic core consists of 2 alpha, 1 beta, 1 beta' and 1 omega subunit. When a sigma factor is associated with the core the holoenzyme is formed, which can initiate transcription.

It catalyses the reaction RNA(n) + a ribonucleoside 5'-triphosphate = RNA(n+1) + diphosphate. In terms of biological role, DNA-dependent RNA polymerase catalyzes the transcription of DNA into RNA using the four ribonucleoside triphosphates as substrates. This is DNA-directed RNA polymerase subunit beta from Enterococcus faecium (Streptococcus faecium).